The chain runs to 110 residues: Secreted Ly-6/uPAR-related protein 1 (110 aa).

Positions Met1–Ala22 are cleaved as a signal peptide. A UPAR/Ly6 domain is found at Arg24 to Cys73. 5 cysteine pairs are disulfide-bonded: Cys25–Cys50, Cys28–Cys37, Cys43–Cys73, Cys77–Cys93, and Cys94–Cys99.

In terms of assembly, homodimer. Interacts with PLAU. Interacts with CHRNA7. In terms of tissue distribution, expressed in skin, eye, whole lung, trachea, esophagus and stomach. Widely expressed in various tissues including spleen and thymus but not pancreas. Expressed in macrophages, dendritic cells, T and B cells. Expressed in lung specifically in ciliated bronchial epithelial cells (at protein level). Expression is decreased in lungs of asthmatic model mice. Expressed in the cornea.

The protein localises to the secreted. Its function is as follows. Has an antitumor activity. Was found to be a marker of late differentiation of the skin. Implicated in maintaining the physiological and structural integrity of the keratinocyte layers of the skin. In vitro down-regulates keratinocyte proliferation; the function may involve the proposed role as modulator of nicotinic acetylcholine receptors (nAChRs) activity. In vitro inhibits alpha-7-dependent nAChR currents in an allosteric manner. In T cells may be involved in regulation of intracellular Ca(2+) signaling. Seems to have a immunomodulatory function in the cornea. The function may implicate a possible role as a scavenger receptor for PLAU thereby blocking PLAU-dependent functions of PLAUR such as in cell migration and proliferation. In Mus musculus (Mouse), this protein is Secreted Ly-6/uPAR-related protein 1 (Slurp1).